Consider the following 133-residue polypeptide: Small ribosomal subunit protein uS8 (133 aa).

Belongs to the universal ribosomal protein uS8 family. As to quaternary structure, part of the 30S ribosomal subunit. Contacts proteins S5 and S12.

One of the primary rRNA binding proteins, it binds directly to 16S rRNA central domain where it helps coordinate assembly of the platform of the 30S subunit. In Leptospira borgpetersenii serovar Hardjo-bovis (strain JB197), this protein is Small ribosomal subunit protein uS8.